Consider the following 274-residue polypeptide: NH(3)-dependent NAD(+) synthetase (274 aa).

Gly-46 to Ser-53 contacts ATP. Mg(2+) is bound at residue Asp-52. Arg-140 is a deamido-NAD(+) binding site. Thr-160 lines the ATP pocket. Mg(2+) is bound at residue Glu-165. Deamido-NAD(+)-binding residues include Lys-173 and Asp-180. Lys-189 and Thr-211 together coordinate ATP. Residue His-260–Lys-261 participates in deamido-NAD(+) binding.

This sequence belongs to the NAD synthetase family. Homodimer.

The enzyme catalyses deamido-NAD(+) + NH4(+) + ATP = AMP + diphosphate + NAD(+) + H(+). It functions in the pathway cofactor biosynthesis; NAD(+) biosynthesis; NAD(+) from deamido-NAD(+) (ammonia route): step 1/1. Catalyzes the ATP-dependent amidation of deamido-NAD to form NAD. Uses ammonia as a nitrogen source. This Listeria welshimeri serovar 6b (strain ATCC 35897 / DSM 20650 / CCUG 15529 / CIP 8149 / NCTC 11857 / SLCC 5334 / V8) protein is NH(3)-dependent NAD(+) synthetase.